The primary structure comprises 469 residues: Ufm1-specific protease 2 (469 aa).

Methionine 1 is subject to N-acetylmethionine. Residues cysteine 302, aspartate 426, and histidine 428 contribute to the active site.

Belongs to the peptidase C78 family. In terms of tissue distribution, expressed in brain.

Its subcellular location is the endoplasmic reticulum. It is found in the cytoplasm. The protein resides in the nucleus. Functionally, thiol-dependent isopeptidase that specifically cleaves UFM1, a ubiquitin-like modifier protein, from conjugated proteins, such as CD274/PD-L1, CYB5R3, DDRGK1, MRE11, RPL26/uL24, TRIP4 and RPL26/uL24. While it is also able to mediate the processing of UFM1 precursors, a prerequisite for conjugation reactions, UFSP2 mainly acts as a protein deUFMylase that mediates deconjugation of UFM1 from target proteins. Mediates deUFMylation of RPL26/uL24, a critical step to release the UFM1 ribosome E3 ligase (UREL) complex during the recycling of 60S ribosome subunits from the endoplasmic reticulum. Catalyzes deUFMylation of TRIP4, regulating intracellular nuclear receptors transactivation and thereby regulate cell proliferation and differentiation. The sequence is that of Ufm1-specific protease 2 from Homo sapiens (Human).